A 101-amino-acid polypeptide reads, in one-letter code: Small ubiquitin-related modifier 1 (101 aa).

At S2 the chain carries N-acetylserine. S2 is subject to Phosphoserine. K7 participates in a covalent cross-link: Glycyl lysine isopeptide (Lys-Gly) (interchain with G-Cter in SUMO1); alternate. K7 is covalently cross-linked (Glycyl lysine isopeptide (Lys-Gly) (interchain with G-Cter in SUMO2); alternate). The residue at position 9 (S9) is a Phosphoserine. Glycyl lysine isopeptide (Lys-Gly) (interchain with G-Cter in SUMO2) cross-links involve residues K16, K17, and K23. Residues K16–K25 are (Microbial infection) Interaction with Tula hantavirus. In terms of domain architecture, Ubiquitin-like spans E20–G97. K25 participates in a covalent cross-link: Glycyl lysine isopeptide (Lys-Gly) (interchain with G-Cter in SUMO1). S32 bears the Phosphoserine mark. Residues K37, K39, K45, and K46 each participate in a glycyl lysine isopeptide (Lys-Gly) (interchain with G-Cter in SUMO2) cross-link. The tract at residues K37–M40 is (Microbial infection) Interaction with Tula hantavirus. G97 is covalently cross-linked (Glycyl lysine isopeptide (Gly-Lys) (interchain with K-? in acceptor proteins)). A propeptide spanning residues H98–V101 is cleaved from the precursor.

This sequence belongs to the ubiquitin family. SUMO subfamily. As to quaternary structure, covalently attached to KCNB1; UBE2I increases cross-linking with KCNB1 and PIAS1 decreases cross-links with KCNB1. Interacts with SAE2, RANBP2, PIAS1 and PIAS2. Interacts with PRKN. Covalently attached to a number of proteins such as IKFZ1, PML, RANGAP1, HIPK2, SP100, p53, p73-alpha, MDM2, JUN, DNMT3B and TDG. Also interacts with HIF1A, HIPK2, HIPK3, CHD3, EXOSC9, RAD51 and RAD52. Interacts with USP25 (via ts SIM domain); the interaction weakly sumoylates USP25. Interacts with SIMC1, CASP8AP2, RNF111 and SOBP (via SIM domains). Interacts with BHLHE40/DEC1. Interacts with RWDD3. Interacts with UBE2I/UBC9 and this interaction is enhanced in the presence of RWDD3. Interacts with MTA1. Interacts with SENP2. Interacts with HINT1. (Microbial infection) Interacts with Epstein-barr virus BGLF4. In terms of assembly, (Microbial infection) Interacts (via N-terminus) with Tula hantavirus nucleoprotein. As to quaternary structure, (Microbial infection) Interacts (via N-terminus) with Hantaan hantavirus nucleoprotein. Cleavage of precursor form by SENP1 or SENP2 is necessary for function. In terms of processing, polymeric SUMO1 chains undergo polyubiquitination by RNF4.

It is found in the nucleus membrane. The protein localises to the nucleus speckle. Its subcellular location is the cytoplasm. It localises to the nucleus. The protein resides in the PML body. It is found in the cell membrane. In terms of biological role, ubiquitin-like protein that can be covalently attached to proteins as a monomer or a lysine-linked polymer. Covalent attachment via an isopeptide bond to its substrates requires prior activation by the E1 complex SAE1-SAE2 and linkage to the E2 enzyme UBE2I, and can be promoted by E3 ligases such as PIAS1-4, RANBP2 or CBX4. This post-translational modification on lysine residues of proteins plays a crucial role in a number of cellular processes such as nuclear transport, DNA replication and repair, mitosis and signal transduction. Involved for instance in targeting RANGAP1 to the nuclear pore complex protein RANBP2. Covalently attached to the voltage-gated potassium channel KCNB1; this modulates the gating characteristics of KCNB1. Polymeric SUMO1 chains are also susceptible to polyubiquitination which functions as a signal for proteasomal degradation of modified proteins. May also regulate a network of genes involved in palate development. Covalently attached to ZFHX3. The sequence is that of Small ubiquitin-related modifier 1 (SUMO1) from Homo sapiens (Human).